We begin with the raw amino-acid sequence, 259 residues long: Tryptophan synthase alpha chain (259 aa).

Residues Glu52 and Asp63 each act as proton acceptor in the active site.

This sequence belongs to the TrpA family. As to quaternary structure, tetramer of two alpha and two beta chains.

It carries out the reaction (1S,2R)-1-C-(indol-3-yl)glycerol 3-phosphate + L-serine = D-glyceraldehyde 3-phosphate + L-tryptophan + H2O. The protein operates within amino-acid biosynthesis; L-tryptophan biosynthesis; L-tryptophan from chorismate: step 5/5. The alpha subunit is responsible for the aldol cleavage of indoleglycerol phosphate to indole and glyceraldehyde 3-phosphate. In Streptococcus gordonii (strain Challis / ATCC 35105 / BCRC 15272 / CH1 / DL1 / V288), this protein is Tryptophan synthase alpha chain.